Consider the following 464-residue polypeptide: Protein FAM90A16 (464 aa).

Disordered regions lie at residues 1 to 42 (MMAR…DPRL), 70 to 389 (PATL…HDGA), and 415 to 437 (HSPE…SEAP). 2 stretches are compositionally biased toward basic and acidic residues: residues 74–89 (GKKE…KPRV) and 97–114 (NKDK…DPQR). The span at 180 to 197 (LASLSPLRKASLSSSSSL) shows a compositional bias: low complexity.

Belongs to the FAM90 family.

The chain is Protein FAM90A16 from Homo sapiens (Human).